Reading from the N-terminus, the 341-residue chain is UDP-3-O-acylglucosamine N-acyltransferase (341 aa).

Histidine 239 acts as the Proton acceptor in catalysis.

Belongs to the transferase hexapeptide repeat family. LpxD subfamily. Homotrimer.

It carries out the reaction a UDP-3-O-[(3R)-3-hydroxyacyl]-alpha-D-glucosamine + a (3R)-hydroxyacyl-[ACP] = a UDP-2-N,3-O-bis[(3R)-3-hydroxyacyl]-alpha-D-glucosamine + holo-[ACP] + H(+). It functions in the pathway bacterial outer membrane biogenesis; LPS lipid A biosynthesis. Its function is as follows. Catalyzes the N-acylation of UDP-3-O-acylglucosamine using 3-hydroxyacyl-ACP as the acyl donor. Is involved in the biosynthesis of lipid A, a phosphorylated glycolipid that anchors the lipopolysaccharide to the outer membrane of the cell. In Shewanella sp. (strain MR-4), this protein is UDP-3-O-acylglucosamine N-acyltransferase.